Here is a 119-residue protein sequence, read N- to C-terminus: Protein TraH (119 aa).

Residues 1–67 (MSNPNEMTDE…ALDESRRPKA (67 aa)) form a disordered region. The segment covering 41-54 (APSAPAEPSHSASP) has biased composition (low complexity).

In terms of biological role, the initiation process of transfer DNA synthesis requires the interaction of at least three plasmid-specific components (TraH, TraI, and TraJ) at the transfer origin resulting in the assembly of a specialized nucleoprotein complex - the relaxosome. The sequence is that of Protein TraH (traH) from Escherichia coli.